The sequence spans 154 residues: UPF0225 protein YPTB2098 (154 aa).

Belongs to the UPF0225 family.

This chain is UPF0225 protein YPTB2098, found in Yersinia pseudotuberculosis serotype I (strain IP32953).